The chain runs to 127 residues: Large ribosomal subunit protein bL12 (127 aa).

The protein belongs to the bacterial ribosomal protein bL12 family. As to quaternary structure, homodimer. Part of the ribosomal stalk of the 50S ribosomal subunit. Forms a multimeric L10(L12)X complex, where L10 forms an elongated spine to which 2 to 4 L12 dimers bind in a sequential fashion. Binds GTP-bound translation factors.

Forms part of the ribosomal stalk which helps the ribosome interact with GTP-bound translation factors. Is thus essential for accurate translation. The sequence is that of Large ribosomal subunit protein bL12 from Caulobacter vibrioides (strain ATCC 19089 / CIP 103742 / CB 15) (Caulobacter crescentus).